The chain runs to 147 residues: Transcriptional regulator FurA (147 aa).

Residues 1–85 (MSSIPDYAEQ…GSVARYESRV (85 aa)) form a DNA-binding region. Residues His-34 and Glu-82 each coordinate Zn(2+). The dimerization stretch occupies residues 86–147 (GDNHHHIVCR…SISDTSRSHP (62 aa)). The Fe cation site is built by Asp-87 and His-89. Zn(2+)-binding residues include His-91, Cys-94, Cys-97, and Asp-102. Residue Glu-109 participates in Fe cation binding.

The protein belongs to the Fur family. In terms of assembly, homodimer.

It is found in the cytoplasm. Represses transcription of the catalase-peroxidase gene katG and its own transcription by binding to the promoter region in a redox-dependent manner. The protein is Transcriptional regulator FurA (furA) of Mycobacterium bovis (strain ATCC BAA-935 / AF2122/97).